A 184-amino-acid chain; its full sequence is MVRKLKFHEQKLLKQVDFLNWEVTDHNLHELRVLRRYRLQRREDYTRYNQLSRAVRELARRLRDLPERDQFRVRASAALLDKLYALGLVPTRGSLELCDFVTASSFCRRRLPTVLLKLRMAQHLQAAVAFVEQGHVRVGPDVVTDPAFLVTRSMEDFVTWVDSSKIKRHVLEYNEERDDFDLEA.

The 67-residue stretch at 109-175 folds into the S4 RNA-binding domain; the sequence is RRLPTVLLKL…IKRHVLEYNE (67 aa).

This sequence belongs to the universal ribosomal protein uS4 family. In terms of assembly, part of the small subunit (SSU) processome, composed of more than 70 proteins and the RNA chaperone small nucleolar RNA (snoRNA) U3. Component of a heterotrimeric complex containing IMP3, IMP4 and MPHOSPH10. Interacts with MPHOSPH10.

The protein resides in the nucleus. It is found in the nucleolus. In terms of biological role, component of the 60-80S U3 small nucleolar ribonucleoprotein (U3 snoRNP). Required for the early cleavages during pre-18S ribosomal RNA processing. Part of the small subunit (SSU) processome, first precursor of the small eukaryotic ribosomal subunit. During the assembly of the SSU processome in the nucleolus, many ribosome biogenesis factors, an RNA chaperone and ribosomal proteins associate with the nascent pre-rRNA and work in concert to generate RNA folding, modifications, rearrangements and cleavage as well as targeted degradation of pre-ribosomal RNA by the RNA exosome. This Homo sapiens (Human) protein is U3 small nucleolar ribonucleoprotein protein IMP3.